The following is a 596-amino-acid chain: Aspartate--tRNA(Asp/Asn) ligase (596 aa).

An L-aspartate-binding site is contributed by Glu175. The segment at 199 to 202 (QQYK) is aspartate. Arg221 and His454 together coordinate L-aspartate. 221-223 (RDE) serves as a coordination point for ATP. Glu488 serves as a coordination point for ATP. Position 495 (Arg495) interacts with L-aspartate. Position 540-543 (540-543 (GVDR)) interacts with ATP.

The protein belongs to the class-II aminoacyl-tRNA synthetase family. Type 1 subfamily. In terms of assembly, homodimer.

It is found in the cytoplasm. The enzyme catalyses tRNA(Asx) + L-aspartate + ATP = L-aspartyl-tRNA(Asx) + AMP + diphosphate. Aspartyl-tRNA synthetase with relaxed tRNA specificity since it is able to aspartylate not only its cognate tRNA(Asp) but also tRNA(Asn). Reaction proceeds in two steps: L-aspartate is first activated by ATP to form Asp-AMP and then transferred to the acceptor end of tRNA(Asp/Asn). This is Aspartate--tRNA(Asp/Asn) ligase from Bartonella henselae (strain ATCC 49882 / DSM 28221 / CCUG 30454 / Houston 1) (Rochalimaea henselae).